A 351-amino-acid chain; its full sequence is GDSL esterase/lipase At3g14820 (351 aa).

A signal peptide spans 1 to 22 (MDLHLIGFLLWFFVVQVTTSSA). The N-linked (GlcNAc...) asparagine glycan is linked to asparagine 25. The active-site Nucleophile is serine 39. Residues aspartate 325 and histidine 328 contribute to the active site.

It belongs to the 'GDSL' lipolytic enzyme family.

Its subcellular location is the secreted. The chain is GDSL esterase/lipase At3g14820 from Arabidopsis thaliana (Mouse-ear cress).